The primary structure comprises 254 residues: tRNA (guanine-N(1)-)-methyltransferase (254 aa).

Residues Gly-115 and 135–140 contribute to the S-adenosyl-L-methionine site; that span reads VGDFVL.

This sequence belongs to the RNA methyltransferase TrmD family. As to quaternary structure, homodimer.

The protein localises to the cytoplasm. It catalyses the reaction guanosine(37) in tRNA + S-adenosyl-L-methionine = N(1)-methylguanosine(37) in tRNA + S-adenosyl-L-homocysteine + H(+). Specifically methylates guanosine-37 in various tRNAs. The polypeptide is tRNA (guanine-N(1)-)-methyltransferase (Francisella tularensis subsp. tularensis (strain FSC 198)).